The sequence spans 127 residues: CST complex subunit TEN1 (127 aa).

Belongs to the TEN1 family. As to quaternary structure, component of the CST complex, composed of CTC1, TEN1 and STN1. Interacts with STN1. No interaction with POT1A, but competes with it for STN1 binding. As to expression, ubiquitous. High expression in meristematic tissues and in vasculature.

It localises to the nucleus. The protein resides in the chromosome. It is found in the telomere. Functionally, required for the maintenance of meristems and stem cells through the reduction of DNA damage. Promotes telomere integrity by maintaining telomere length and proper architecture of the chromosome terminus. Negatively regulates telomerase repeat addition processivity. Hampers contacts between enzymatically active telomerase and CST complex. The polypeptide is CST complex subunit TEN1 (Arabidopsis thaliana (Mouse-ear cress)).